The following is a 291-amino-acid chain: ATP phosphoribosyltransferase (291 aa).

The protein belongs to the ATP phosphoribosyltransferase family. Long subfamily. Mg(2+) is required as a cofactor.

Its subcellular location is the cytoplasm. It carries out the reaction 1-(5-phospho-beta-D-ribosyl)-ATP + diphosphate = 5-phospho-alpha-D-ribose 1-diphosphate + ATP. It functions in the pathway amino-acid biosynthesis; L-histidine biosynthesis; L-histidine from 5-phospho-alpha-D-ribose 1-diphosphate: step 1/9. With respect to regulation, feedback inhibited by histidine. Functionally, catalyzes the condensation of ATP and 5-phosphoribose 1-diphosphate to form N'-(5'-phosphoribosyl)-ATP (PR-ATP). Has a crucial role in the pathway because the rate of histidine biosynthesis seems to be controlled primarily by regulation of HisG enzymatic activity. The protein is ATP phosphoribosyltransferase of Desulfosudis oleivorans (strain DSM 6200 / JCM 39069 / Hxd3) (Desulfococcus oleovorans).